Here is a 591-residue protein sequence, read N- to C-terminus: Aspartate--tRNA ligase (591 aa).

Position 173 (Glu-173) interacts with L-aspartate. Positions 197 to 200 (QLFK) are aspartate. Position 219 (Arg-219) interacts with L-aspartate. ATP contacts are provided by residues 219–221 (RDE) and Gln-228. Residue His-448 participates in L-aspartate binding. Glu-482 is an ATP binding site. Arg-489 is a binding site for L-aspartate. ATP is bound at residue 534-537 (GLDR).

This sequence belongs to the class-II aminoacyl-tRNA synthetase family. Type 1 subfamily. Homodimer.

Its subcellular location is the cytoplasm. It carries out the reaction tRNA(Asp) + L-aspartate + ATP = L-aspartyl-tRNA(Asp) + AMP + diphosphate. Catalyzes the attachment of L-aspartate to tRNA(Asp) in a two-step reaction: L-aspartate is first activated by ATP to form Asp-AMP and then transferred to the acceptor end of tRNA(Asp). In Shewanella amazonensis (strain ATCC BAA-1098 / SB2B), this protein is Aspartate--tRNA ligase.